The chain runs to 598 residues: Fumarate reductase flavoprotein subunit (598 aa).

Residues 12–16 (GAGGA), 36–38 (ISK), 44–52 (SHTVAAEGG), 156–158 (HFV), and aspartate 212 contribute to the FAD site. Histidine 45 is subject to Tele-8alpha-FAD histidine. Active-site residues include histidine 233 and arginine 249. FAD-binding positions include 356–357 (HY), glutamate 380, and 391–397 (RLGSNSL). Residues 577–598 (AKRVYGGEADAQEKSDKEQANG) are disordered. A compositionally biased stretch (basic and acidic residues) spans 587–598 (AQEKSDKEQANG).

It belongs to the FAD-dependent oxidoreductase 2 family. FRD/SDH subfamily. Part of an enzyme complex containing four subunits: a flavoprotein (FrdA), an iron-sulfur protein (FrdB), and two hydrophobic anchor proteins (FrdC and FrdD). Interacts with SdhE. Requires FAD as cofactor.

It is found in the cell inner membrane. The catalysed reaction is a quinone + succinate = fumarate + a quinol. It carries out the reaction a menaquinone + succinate = a menaquinol + fumarate. Its function is as follows. Two distinct, membrane-bound, FAD-containing enzymes are responsible for the catalysis of fumarate and succinate interconversion; the fumarate reductase is used in anaerobic growth, and the succinate dehydrogenase is used in aerobic growth. The sequence is that of Fumarate reductase flavoprotein subunit from Serratia sp. (strain ATCC 39006) (Prodigiosinella confusarubida).